The primary structure comprises 599 residues: Microtubule-associated protein 70-2 (599 aa).

Residues 1–30 are disordered; the sequence is MADGGGGEEGSASALRGSARRRGAVQPAGL. Residues 43–349 are a coiled coil; that stretch reads DPVKVELNRL…ARSEAQLKEK (307 aa). Residues 227–460 are required for targeting to microtubules; the sequence is ILDRLHRQKV…HLLNRSTDAV (234 aa). 2 disordered regions span residues 357-453 and 557-599; these read LEDG…PHLL and AMRL…RNLQ. Low complexity predominate over residues 404–420; it reads RRSPSFNSRSSLSTSSS. Residues 533 to 570 adopt a coiled-coil conformation; it reads LTKAMEVEAKKMRREVAAMEKEVAAMRLDKDQENKAKR. Over residues 557-568 the composition is skewed to basic and acidic residues; the sequence is AMRLDKDQENKA.

This sequence belongs to the MAP70 family.

The protein resides in the cytoplasm. The protein localises to the cytoskeleton. Functionally, plant-specific protein that interact with microtubules. The polypeptide is Microtubule-associated protein 70-2 (MAP70.2) (Oryza sativa subsp. japonica (Rice)).